The primary structure comprises 110 residues: Parvalbumin alpha (110 aa).

S2 carries the post-translational modification N-acetylserine. Phosphoserine is present on residues S2 and S24. EF-hand domains follow at residues 39–74 (KSAD…FSPD) and 78–110 (LSAK…VAES). D52, D54, S56, F58, E60, E63, D91, D93, D95, K97, and E102 together coordinate Ca(2+).

This sequence belongs to the parvalbumin family.

Its function is as follows. In muscle, parvalbumin is thought to be involved in relaxation after contraction. It binds two calcium ions. The chain is Parvalbumin alpha (PVALB) from Macaca fuscata fuscata (Japanese macaque).